The chain runs to 573 residues: Putative inorganic phosphate transporter C1683.01 (573 aa).

The next 6 membrane-spanning stretches (helical) occupy residues 48-68 (MMLA…INLV), 100-120 (AASN…GDFF), 124-144 (FVYG…IAMP), 154-174 (MMWV…DYPM), 194-214 (LIFA…IILL), and 230-250 (LEGV…GVLI). Polar residues predominate over residues 261 to 270 (FKNSQQLNSG). Disordered stretches follow at residues 261 to 280 (FKNS…TSLN) and 290 to 312 (PSVT…RSNT). 6 consecutive transmembrane segments (helical) span residues 348–368 (HLLG…GVNL), 397–417 (LIIA…LVEI), 422–442 (WIQL…AGRW), 451–471 (FACF…TTFI), 487–507 (GISA…FNFL), and 510–530 (IIGY…GILF).

It belongs to the major facilitator superfamily. Sugar transporter (TC 2.A.1.1) family.

It is found in the endoplasmic reticulum membrane. High-affinity transporter for external inorganic phosphate. This Schizosaccharomyces pombe (strain 972 / ATCC 24843) (Fission yeast) protein is Putative inorganic phosphate transporter C1683.01.